We begin with the raw amino-acid sequence, 349 residues long: MAKASESLDLSVNESTDKALDRDCTTLSRHVLQQLQSFSADAQDLSALMNRIALAGKLVARRLSRAGLMEGVLGFTGEVNVQGESVKKMDVYANDVFISVFKQSGLVCRLASEEMDEPYYIPENCPVGRYTLLYDPIDGSSNTDTNLSLGSIFSIRQQEGDDSDGQAKDLLTNGRKQIAAGYILYGPSTMLVYTMGKGVHSFTLDPSLGEFILSEENIRIPDHGAVYSVNEGNFWQWEESMREYIRYVHRTEGYTARYSGAMVSDIHRILVQGGVFLYPGTVQNPEGKLRLLYESAPLAFLIQQAGGRATTGLVDILDVVPKKLHQRTPLIIGSKEDVAKVESFIQNGH.

E113, D135, I137, and D138 together coordinate Mg(2+). Substrate-binding positions include 138-141 (DGSS), N230, Y258, and K288. Residue E294 coordinates Mg(2+).

It belongs to the FBPase class 1 family. In terms of assembly, homotetramer. Mg(2+) serves as cofactor.

It localises to the cytoplasm. It catalyses the reaction beta-D-fructose 1,6-bisphosphate + H2O = beta-D-fructose 6-phosphate + phosphate. It participates in carbohydrate biosynthesis; Calvin cycle. In Trichormus variabilis (strain ATCC 29413 / PCC 7937) (Anabaena variabilis), this protein is Fructose-1,6-bisphosphatase class 1.